We begin with the raw amino-acid sequence, 421 residues long: Cyclin-A1 (421 aa).

The segment at 1–21 is disordered; sequence MHRQSSKSGVALPPVGQGPDA.

The protein belongs to the cyclin family. Cyclin AB subfamily. As to quaternary structure, interacts with INCA1 and KLHDC9. Interacts with the CDK2 and CDC2 protein kinases to form a serine/threonine kinase holoenzyme complex. The cyclin subunit imparts substrate specificity to the complex. Found in a complex with CDK2, CABLES1 and CCNE1. Post-translationally, polyubiquitinated via 'Lys-11'-linked ubiquitin by the anaphase-promoting complex (APC/C), leading to its degradation by the proteasome. Deubiquitinated and stabilized by USP37 enables entry into S phase. Ubiquitinated during the G1 phase by the SCF(FBXO31) complex, leading to its proteasomal degradation. As to expression, testis and ovaries.

The protein resides in the nucleus. Its subcellular location is the cytoplasm. It localises to the cytoskeleton. It is found in the spindle. Its function is as follows. May be involved in the control of the cell cycle at the G1/S (start) and G2/M (mitosis) transitions. May primarily function in the control of the germline meiotic cell cycle and additionally in the control of mitotic cell cycle in some somatic cells. This chain is Cyclin-A1 (Ccna1), found in Mus musculus (Mouse).